We begin with the raw amino-acid sequence, 617 residues long: UvrABC system protein C (617 aa).

The region spanning 12 to 91 is the GIY-YIG domain; that stretch reads EKPGVYLMKD…IKKYKPKYNV (80 aa). Residues 203-238 form the UVR domain; sequence EWLVEKLKEEMQKAADELRFEEAARLRDQIFAIEKI.

Belongs to the UvrC family. In terms of assembly, interacts with UvrB in an incision complex.

It is found in the cytoplasm. Its function is as follows. The UvrABC repair system catalyzes the recognition and processing of DNA lesions. UvrC both incises the 5' and 3' sides of the lesion. The N-terminal half is responsible for the 3' incision and the C-terminal half is responsible for the 5' incision. The polypeptide is UvrABC system protein C (Caldanaerobacter subterraneus subsp. tengcongensis (strain DSM 15242 / JCM 11007 / NBRC 100824 / MB4) (Thermoanaerobacter tengcongensis)).